The following is a 180-amino-acid chain: Bifunctional protein PyrR (180 aa).

Residues 39-40 (TR), 103-111 (DDVLYTGRT), and Arg136 contribute to the substrate site. Residues 99 to 111 (VILIDDVLYTGRT) carry the PRPP-binding motif.

This sequence belongs to the purine/pyrimidine phosphoribosyltransferase family. PyrR subfamily. In terms of assembly, homodimer and homohexamer; in equilibrium.

The enzyme catalyses UMP + diphosphate = 5-phospho-alpha-D-ribose 1-diphosphate + uracil. Its function is as follows. Regulates transcriptional attenuation of the pyrimidine nucleotide (pyr) operon by binding in a uridine-dependent manner to specific sites on pyr mRNA. This disrupts an antiterminator hairpin in the RNA and favors formation of a downstream transcription terminator, leading to a reduced expression of downstream genes. Also displays a weak uracil phosphoribosyltransferase activity which is not physiologically significant. The chain is Bifunctional protein PyrR from Halalkalibacterium halodurans (strain ATCC BAA-125 / DSM 18197 / FERM 7344 / JCM 9153 / C-125) (Bacillus halodurans).